The following is a 991-amino-acid chain: KAT8 regulatory NSL complex subunit 1-like protein (991 aa).

A Glycyl lysine isopeptide (Lys-Gly) (interchain with G-Cter in SUMO2) cross-link involves residue K136. Positions 443 to 462 (VNSQVPQRSEEPLPEHDFEM) are disordered. Residues 450–461 (RSEEPLPEHDFE) are compositionally biased toward basic and acidic residues. S463 is subject to Phosphoserine. The segment covering 749–763 (ANVTSRTQNPSSQNT) has biased composition (polar residues). The tract at residues 749-770 (ANVTSRTQNPSSQNTSRRRLRS) is disordered. The 122-residue stretch at 798–919 (EILTPRWRKV…DGQEDKSLRW (122 aa)) folds into the PEHE domain. N6-acetyllysine is present on K863.

In terms of processing, acetylated on lysine residues by KAT8 upon ionizing radiation-induced DNA damage; deacetylated by HDAC3.

This chain is KAT8 regulatory NSL complex subunit 1-like protein (Kansl1l), found in Mus musculus (Mouse).